The chain runs to 1384 residues: Contactin-associated protein 1 (1384 aa).

Residues 1 to 19 (MMHLRLFCILLAAVSGAEG) form the signal peptide. Residues 20-1283 (WGYYGCDEEL…PYYHDEGWVA (1264 aa)) lie on the Extracellular side of the membrane. The F5/8 type C domain occupies 25–168 (CDEELVGPLY…IGLRLGLYGC (144 aa)). A disulfide bond links Cys25 and Cys168. 3 N-linked (GlcNAc...) asparagine glycosylation sites follow: Asn120, Asn128, and Asn276. Laminin G-like domains are found at residues 203–355 (FKTE…AFRC) and 389–538 (FRTW…FDTC). Cysteines 323 and 355 form a disulfide. N-linked (GlcNAc...) asparagine glycosylation is found at Asn420, Asn499, and Asn518. Intrachain disulfides connect Cys506–Cys538, Cys544–Cys555, Cys549–Cys564, and Cys566–Cys576. Residues 540–577 (ITDRCSPNMCEHDGRCYQSWDDFICYCELTGYKGETCH) form the EGF-like 1 domain. Residues 576–795 (CHTPLYKESC…NTISFHTGAA (220 aa)) form the Fibrinogen C-terminal domain. Asn597, Asn653, Asn664, Asn763, Asn804, Asn843, Asn860, Asn948, and Asn956 each carry an N-linked (GlcNAc...) asparagine glycan. The region spanning 813-956 (FRTSAPSGVF…ANASEGTSPN (144 aa)) is the Laminin G-like 3 domain. Disulfide bonds link Cys930–Cys957, Cys961–Cys974, Cys968–Cys983, and Cys985–Cys995. The EGF-like 2 domain maps to 957 to 996 (CTGHCAHPRLPCFHGGRCVERYSYYTCDCDLTAFDGPYCN). N-linked (GlcNAc...) asparagine glycans are attached at residues Asn1078 and Asn1147. Positions 1088-1250 (FSTSSAPAVL…VQGELSESNC (163 aa)) constitute a Laminin G-like 4 domain. Cys1209 and Cys1250 form a disulfide bridge. Residues 1284-1304 (ILLGFLVAFLLLGLVGMLVLF) traverse the membrane as a helical segment. Residues 1305–1384 (YLQNHRYKGS…PQILEESRSE (80 aa)) are Cytoplasmic-facing. Residues 1319–1328 (EPKAAHEYHP) are compositionally biased toward basic and acidic residues. A disordered region spans residues 1319-1384 (EPKAAHEYHP…PQILEESRSE (66 aa)). Residues 1328-1369 (PGSKPPLPTSGPAQVPTPTAAPNQAPASAPAPAPTPAPAPGP) carry the SH3-binding motif. Residues 1339–1355 (PAQVPTPTAAPNQAPAS) show a composition bias toward low complexity. Residues 1356 to 1368 (APAPAPTPAPAPG) are compositionally biased toward pro residues. Ser1383 is subject to Phosphoserine.

It belongs to the neurexin family. As to quaternary structure, interacts with CNTN1/contactin in cis form. As to expression, predominantly expressed in brain. Weak expression detected in ovary, pancreas, colon, lung, heart, intestine and testis.

The protein localises to the membrane. It localises to the cell junction. The protein resides in the paranodal septate junction. Required, with CNTNAP2, for radial and longitudinal organization of myelinated axons. Plays a role in the formation of functional distinct domains critical for saltatory conduction of nerve impulses in myelinated nerve fibers. Demarcates the paranodal region of the axo-glial junction. In association with contactin involved in the signaling between axons and myelinating glial cells. The protein is Contactin-associated protein 1 (CNTNAP1) of Homo sapiens (Human).